The following is a 119-amino-acid chain: MGMKIVGRERRKLRIRKKVEGTPERPRLSVFRSSKHIYAQVIDDVSGKTLAHASTLSKDLKGSLDEDNKVEAAKKVGALIARICKERQIDKVVFDRNGYLYHGRVSALAQAAREAGLDF.

It belongs to the universal ribosomal protein uL18 family. In terms of assembly, part of the 50S ribosomal subunit; part of the 5S rRNA/L5/L18/L25 subcomplex. Contacts the 5S and 23S rRNAs.

Functionally, this is one of the proteins that bind and probably mediate the attachment of the 5S RNA into the large ribosomal subunit, where it forms part of the central protuberance. The protein is Large ribosomal subunit protein uL18 of Sorangium cellulosum (strain So ce56) (Polyangium cellulosum (strain So ce56)).